We begin with the raw amino-acid sequence, 580 residues long: Viral transcription factor IE2 (580 aa).

Over residues M1–P11 the composition is skewed to basic and acidic residues. Disordered regions lie at residues M1–T30 and D99–K161. Over residues D99 to P133 the composition is skewed to polar residues. Residues K175 and K180 each participate in a glycyl lysine isopeptide (Lys-Gly) (interchain with G-Cter in SUMO) cross-link. Positions C199 to I202 match the SUMO-interacting motif 1/SIM1 motif. A non-covalent SUMO1 binding region (SIM) region spans residues I200–E208. Phosphoserine is present on residues S203 and S205. A disordered region spans residues E206–E336. Low complexity-rich tracts occupy residues R216 to T236, S259 to D271, and A302 to G317. Positions I410–I413 match the SUMO-interacting motif 1/SIM2 motif. The SUMO-interacting motif 1/SIM3 motif lies at V501 to L504.

This sequence belongs to the HHV-5 IE2 protein family. Interacts with host SUMO-modified form of TATA-binding protein (TBP)-associated factor 12/TAF12 in a SIM-dependent manner; this interaction increases the transactivation activity of IE2. Interacts with host CHAF1A. Interacts with several components of the host transcriptional machinery including TBP, TF2B and CREB1. Interacts with host DNA replication licensing factor MCM3. Interacts with host PLSCR1; this interaction inhibits IE2 transactivating activity. In terms of processing, phosphorylated by host CK2 at Ser-203 and Ser-205; leading to enhanced SUMOylation. Post-translationally, SUMOylated; SUMOylation is enhanced when IE2 is phosphorylated by host CK2. The sumoylation is necessary for efficient replication of the virus and thus for the function of this viral transcription factor.

It localises to the host nucleus. In terms of biological role, stimulates viral early and late gene expression and thus play a crucial role in the regulation of productive infection. Selectively drives host RNA Pol II transcription initiation at a subset of viral early-late and late promoters without substantially affecting Pol II transcription of expressed host genes. Mechanistically, forms a repressive complex at the major immediate-early promoter region involving direct association with host nucleosomes and TBP. Concerning activation, stimulates transcription by binding nearby, but not within, core promoter regions. In addition, activates quiescent cells to reenter the cell cycle and up-regulates several E2F-responsive genes, which are responsible for pushing the cell into S phase. In S-phase, inhibits cellular DNA synthesis and blocks further cell cycle progression. The protein is Viral transcription factor IE2 (UL122) of Homo sapiens (Human).